A 312-amino-acid polypeptide reads, in one-letter code: MASGNCTTPTTFILSGLTDNPRLQMPLFMVFLVIYTTTLLTNLGLIALIGMDLHLQTPMYIFLQNLSFTDAAYSTVITPKMLATFLEERRTISYVGCILQYFSFVLLTTSEWLLLAVMAYDRYVAICKPLLYPSIMTKAVCWRLVKGLYSLAFLNSLVHTSGLLKLSFCSSNVVNHFFCDNRPLFQISSSSTTLNELLVIISGSLFVMSSIITILISYVFIILTVVMIRSKDGKYKAFSTCTSHLMAVSLFHGTVIFMYLRSVKLFSLDTDKIASLFYTVVIPMLNPLIYSWRNKEVKDALRRLTATSVWLH.

The Extracellular segment spans residues 1–26; that stretch reads MASGNCTTPTTFILSGLTDNPRLQMP. N-linked (GlcNAc...) asparagine glycosylation occurs at N5. The chain crosses the membrane as a helical span at residues 27–49; that stretch reads LFMVFLVIYTTTLLTNLGLIALI. Over 50-57 the chain is Cytoplasmic; that stretch reads GMDLHLQT. A helical transmembrane segment spans residues 58-79; it reads PMYIFLQNLSFTDAAYSTVITP. Topologically, residues 80–100 are extracellular; that stretch reads KMLATFLEERRTISYVGCILQ. The cysteines at positions 97 and 179 are disulfide-linked. Residues 101 to 120 traverse the membrane as a helical segment; it reads YFSFVLLTTSEWLLLAVMAY. The Cytoplasmic segment spans residues 121-139; sequence DRYVAICKPLLYPSIMTKA. A helical transmembrane segment spans residues 140–164; the sequence is VCWRLVKGLYSLAFLNSLVHTSGLL. Over 165–205 the chain is Extracellular; the sequence is KLSFCSSNVVNHFFCDNRPLFQISSSSTTLNELLVIISGSL. A helical transmembrane segment spans residues 206 to 226; sequence FVMSSIITILISYVFIILTVV. At 227–239 the chain is on the cytoplasmic side; the sequence is MIRSKDGKYKAFS. Residues 240-260 traverse the membrane as a helical segment; that stretch reads TCTSHLMAVSLFHGTVIFMYL. Residues 261-271 are Extracellular-facing; the sequence is RSVKLFSLDTD. Residues 272–292 traverse the membrane as a helical segment; that stretch reads KIASLFYTVVIPMLNPLIYSW. Topologically, residues 293–312 are cytoplasmic; sequence RNKEVKDALRRLTATSVWLH.

The protein belongs to the G-protein coupled receptor 1 family.

It is found in the cell membrane. Odorant receptor. This is Olfactory receptor-like protein COR2 (COR2) from Gallus gallus (Chicken).